Consider the following 214-residue polypeptide: Ribosomal RNA small subunit methyltransferase G (214 aa).

S-adenosyl-L-methionine contacts are provided by residues G81, M86, 132–133 (VE), and R147.

The protein belongs to the methyltransferase superfamily. RNA methyltransferase RsmG family.

Its subcellular location is the cytoplasm. It catalyses the reaction guanosine(527) in 16S rRNA + S-adenosyl-L-methionine = N(7)-methylguanosine(527) in 16S rRNA + S-adenosyl-L-homocysteine. In terms of biological role, specifically methylates the N7 position of guanine in position 527 of 16S rRNA. The sequence is that of Ribosomal RNA small subunit methyltransferase G from Pseudomonas paraeruginosa (strain DSM 24068 / PA7) (Pseudomonas aeruginosa (strain PA7)).